The primary structure comprises 209 residues: LWLGTAGMFLGMLYFIARGWGETDGRRQKFYIATILITAIAFVNYLAMALGFGLTFIEFGGEQHPIYWARYTDWLFTTPLLLYDLGLLAGADRNTIYSLVSLDVLMIGTGVVATLSAGSGVLSAGAERLVWWGISTAFLLVLLYFLFSSLSGRVANLPSDTRSTFKTLRNLVTVVWLVYPVWWLVGSEGLGLVGIGIETAGFMVIDLVA.

The helical transmembrane segment at 1-17 (LWLGTAGMFLGMLYFIA) threads the bilayer. Residues 18–31 (RGWGETDGRRQKFY) lie on the Cytoplasmic side of the membrane. A helical transmembrane segment spans residues 32–50 (IATILITAIAFVNYLAMAL). Residues 51-66 (GFGLTFIEFGGEQHPI) are Extracellular-facing. A helical membrane pass occupies residues 67-84 (YWARYTDWLFTTPLLLYD). Over 85-95 (LGLLAGADRNT) the chain is Cytoplasmic. Residues 96–115 (IYSLVSLDVLMIGTGVVATL) form a helical membrane-spanning segment. Over 116–128 (SAGSGVLSAGAER) the chain is Extracellular. The chain crosses the membrane as a helical span at residues 129–148 (LVWWGISTAFLLVLLYFLFS). Residues 149 to 166 (SLSGRVANLPSDTRSTFK) are Cytoplasmic-facing. Residues 167 to 185 (TLRNLVTVVWLVYPVWWLV) form a helical membrane-spanning segment. The Extracellular portion of the chain corresponds to 186 to 197 (GSEGLGLVGIGI). Residues 198-209 (ETAGFMVIDLVA) form a helical membrane-spanning segment.

This sequence belongs to the archaeal/bacterial/fungal opsin family.

It is found in the cell membrane. Light-driven proton pump. This is Bacteriorhodopsin (bop) from Halobacterium halobium (strain shark).